The following is a 317-amino-acid chain: Small ribosomal subunit protein uS2 (317 aa).

Disordered regions lie at residues 1–30 and 293–317; these read MENENLKVEQATTAENNMAEKADDSKASKE and RSFEQNSAEGVKTVEKTTTSTEVAE. A compositionally biased stretch (basic and acidic residues) spans 18–30; the sequence is MAEKADDSKASKE. Positions 308 to 317 are enriched in low complexity; it reads KTTTSTEVAE.

This sequence belongs to the universal ribosomal protein uS2 family.

In Mycoplasmopsis agalactiae (strain NCTC 10123 / CIP 59.7 / PG2) (Mycoplasma agalactiae), this protein is Small ribosomal subunit protein uS2.